The sequence spans 553 residues: Formate--tetrahydrofolate ligase (553 aa).

64-71 (TPAGEGKT) serves as a coordination point for ATP.

It belongs to the formate--tetrahydrofolate ligase family.

The enzyme catalyses (6S)-5,6,7,8-tetrahydrofolate + formate + ATP = (6R)-10-formyltetrahydrofolate + ADP + phosphate. Its pathway is one-carbon metabolism; tetrahydrofolate interconversion. The chain is Formate--tetrahydrofolate ligase from Pseudothermotoga lettingae (strain ATCC BAA-301 / DSM 14385 / NBRC 107922 / TMO) (Thermotoga lettingae).